A 230-amino-acid chain; its full sequence is Ribose-5-phosphate isomerase A (230 aa).

Substrate contacts are provided by residues 32-35, 85-88, and 98-101; these read TGST, DGAD, and KGGG. The Proton acceptor role is filled by glutamate 107. Lysine 125 is a substrate binding site.

The protein belongs to the ribose 5-phosphate isomerase family. As to quaternary structure, homodimer.

It catalyses the reaction aldehydo-D-ribose 5-phosphate = D-ribulose 5-phosphate. The protein operates within carbohydrate degradation; pentose phosphate pathway; D-ribose 5-phosphate from D-ribulose 5-phosphate (non-oxidative stage): step 1/1. Its function is as follows. Catalyzes the reversible conversion of ribose-5-phosphate to ribulose 5-phosphate. This chain is Ribose-5-phosphate isomerase A, found in Burkholderia ambifaria (strain MC40-6).